The primary structure comprises 331 residues: uncharacterized protein (331 aa).

The protein belongs to the proline racemase family.

This is an uncharacterized protein from Bacillus anthracis.